A 147-amino-acid polypeptide reads, in one-letter code: Heavy metal-associated isoprenylated plant protein 27 (147 aa).

In terms of domain architecture, HMA spans 18–82 (FQKVEIKVKM…VMHRTGKKAE (65 aa)). A metal cation contacts are provided by cysteine 29 and cysteine 32. At cysteine 144 the chain carries Cysteine methyl ester. Cysteine 144 carries S-farnesyl cysteine lipidation. Positions 145 to 147 (TIM) are cleaved as a propeptide — removed in mature form.

Belongs to the HIPP family. In terms of assembly, interacts with UBP16. Interacts with ZHD11/HB29.

It localises to the membrane. Heavy-metal-binding protein. Binds cadmium. May be involved in cadmium transport and play a role in cadmium detoxification. In Arabidopsis thaliana (Mouse-ear cress), this protein is Heavy metal-associated isoprenylated plant protein 27.